Here is a 118-residue protein sequence, read N- to C-terminus: Large ribosomal subunit protein bL20 (118 aa).

It belongs to the bacterial ribosomal protein bL20 family.

Functionally, binds directly to 23S ribosomal RNA and is necessary for the in vitro assembly process of the 50S ribosomal subunit. It is not involved in the protein synthesizing functions of that subunit. The protein is Large ribosomal subunit protein bL20 of Sodalis glossinidius (strain morsitans).